A 44-amino-acid polypeptide reads, in one-letter code: Small, acid-soluble spore protein P (44 aa).

The segment at 1-44 (MSHTMGKNNREAKEKKGQPEPLSGSHKVKNRNHSRQKHHAHHDM) is disordered. Residues 8 to 18 (NNREAKEKKGQ) show a composition bias toward basic and acidic residues. The segment covering 26–44 (HKVKNRNHSRQKHHAHHDM) has biased composition (basic residues).

Belongs to the SspP family.

The protein localises to the spore core. This is Small, acid-soluble spore protein P from Bacillus cereus (strain ATCC 14579 / DSM 31 / CCUG 7414 / JCM 2152 / NBRC 15305 / NCIMB 9373 / NCTC 2599 / NRRL B-3711).